Consider the following 187-residue polypeptide: ATP synthase subunit b 2 (187 aa).

The segment covering 1-12 (MAQERAEHESAD) has biased composition (basic and acidic residues). Residues 1-31 (MAQERAEHESADQHTTSTGVPHEGQGEPFPP) are disordered. A helical transmembrane segment spans residues 40 to 60 (LLIWLAISFLLLYALMSKLVL).

It belongs to the ATPase B chain family. In terms of assembly, F-type ATPases have 2 components, F(1) - the catalytic core - and F(0) - the membrane proton channel. F(1) has five subunits: alpha(3), beta(3), gamma(1), delta(1), epsilon(1). F(0) has three main subunits: a(1), b(2) and c(10-14). The alpha and beta chains form an alternating ring which encloses part of the gamma chain. F(1) is attached to F(0) by a central stalk formed by the gamma and epsilon chains, while a peripheral stalk is formed by the delta and b chains.

It is found in the cell inner membrane. F(1)F(0) ATP synthase produces ATP from ADP in the presence of a proton or sodium gradient. F-type ATPases consist of two structural domains, F(1) containing the extramembraneous catalytic core and F(0) containing the membrane proton channel, linked together by a central stalk and a peripheral stalk. During catalysis, ATP synthesis in the catalytic domain of F(1) is coupled via a rotary mechanism of the central stalk subunits to proton translocation. Its function is as follows. Component of the F(0) channel, it forms part of the peripheral stalk, linking F(1) to F(0). The b'-subunit is a diverged and duplicated form of b found in plants and photosynthetic bacteria. The protein is ATP synthase subunit b 2 (atpF2) of Beijerinckia indica subsp. indica (strain ATCC 9039 / DSM 1715 / NCIMB 8712).